Consider the following 591-residue polypeptide: Probable acetolactate synthase large subunit (591 aa).

E47 is a binding site for thiamine diphosphate. FAD contacts are provided by residues R149, 258 to 279, and 301 to 320; these read HGTKAANYAVTECDVLIAIGCR and DIDPAEIGKNVRADIPIVGD. Residues 396-476 form a thiamine pyrophosphate binding region; it reads QNQMWMAHFF…VVICIFDNRT (81 aa). Mg(2+) contacts are provided by D447 and N474.

This sequence belongs to the TPP enzyme family. In terms of assembly, dimer of large and small chains. It depends on Mg(2+) as a cofactor. Thiamine diphosphate is required as a cofactor.

The enzyme catalyses 2 pyruvate + H(+) = (2S)-2-acetolactate + CO2. The protein operates within amino-acid biosynthesis; L-isoleucine biosynthesis; L-isoleucine from 2-oxobutanoate: step 1/4. Its pathway is amino-acid biosynthesis; L-valine biosynthesis; L-valine from pyruvate: step 1/4. This Methanocaldococcus jannaschii (strain ATCC 43067 / DSM 2661 / JAL-1 / JCM 10045 / NBRC 100440) (Methanococcus jannaschii) protein is Probable acetolactate synthase large subunit (ilvB).